The sequence spans 509 residues: Aspartic proteinase oryzasin-1 (509 aa).

The N-terminal stretch at 1–24 (MGTRSVALVLLAAVLLQALLPASA) is a signal peptide. Positions 25–67 (AEGLVRIALKKRPIDENSRVAARLSGEEGARRLGLRGANSLGG) are cleaved as a propeptide — activation peptide. One can recognise a Peptidase A1 domain in the interval 85–506 (YFGEIGVGTP…DYGKMRVGFA (422 aa)). The active site involves Asp-103. Cys-116 and Cys-122 are oxidised to a cystine. Residue Asn-252 is glycosylated (N-linked (GlcNAc...) asparagine). Cys-281 and Cys-285 are joined by a disulfide. Residue Asp-290 is part of the active site. The Saposin B-type domain maps to 315–420 (VVSQECKTVV…NQLCDKLPSP (106 aa)). 4 disulfides stabilise this stretch: Cys-320-Cys-414, Cys-345-Cys-386, Cys-351-Cys-383, and Cys-428-Cys-465. N-linked (GlcNAc...) asparagine glycosylation is present at Asn-400.

It belongs to the peptidase A1 family.

It is found in the vacuole. Involved in the breakdown of propeptides of storage proteins in protein-storage vacuoles. In Oryza sativa subsp. japonica (Rice), this protein is Aspartic proteinase oryzasin-1.